Here is a 41-residue protein sequence, read N- to C-terminus: uncharacterized protein (41 aa).

A helical membrane pass occupies residues 8–28 (IKKIAMFFLGILVGVFIVLFF).

Its subcellular location is the membrane. This is an uncharacterized protein from Streptococcus pneumoniae serotype 2 (strain D39 / NCTC 7466).